A 350-amino-acid polypeptide reads, in one-letter code: Small ribosomal subunit biogenesis GTPase RsgA (350 aa).

The segment covering 1 to 17 has biased composition (polar residues); it reads MSKNKLSKGQQRRVNAN. A disordered region spans residues 1–33; sequence MSKNKLSKGQQRRVNANHQRRLKTSKEKPDYDD. The region spanning 104 to 273 is the CP-type G domain; the sequence is TSVLTRPDFY…VIDSPGVREF (170 aa). Residues 160–163 and 214–222 contribute to the GTP site; these read NKID and GQSGVGKSS. Zn(2+) is bound by residues cysteine 297, cysteine 302, histidine 304, and cysteine 310.

This sequence belongs to the TRAFAC class YlqF/YawG GTPase family. RsgA subfamily. In terms of assembly, monomer. Associates with 30S ribosomal subunit, binds 16S rRNA. Requires Zn(2+) as cofactor.

Its subcellular location is the cytoplasm. Functionally, one of several proteins that assist in the late maturation steps of the functional core of the 30S ribosomal subunit. Helps release RbfA from mature subunits. May play a role in the assembly of ribosomal proteins into the subunit. Circularly permuted GTPase that catalyzes slow GTP hydrolysis, GTPase activity is stimulated by the 30S ribosomal subunit. This chain is Small ribosomal subunit biogenesis GTPase RsgA, found in Escherichia coli (strain SMS-3-5 / SECEC).